Here is a 387-residue protein sequence, read N- to C-terminus: Succinate--CoA ligase [ADP-forming] subunit beta (387 aa).

One can recognise an ATP-grasp domain in the interval 9-244 (KRLLAEEGVP…STQQDGREIT (236 aa)). Residues K46, 53 to 55 (GRG), E99, S102, and E107 contribute to the ATP site. Residues N199 and D213 each coordinate Mg(2+). Residues N264 and 321–323 (GIT) each bind substrate.

This sequence belongs to the succinate/malate CoA ligase beta subunit family. In terms of assembly, heterotetramer of two alpha and two beta subunits. Requires Mg(2+) as cofactor.

The catalysed reaction is succinate + ATP + CoA = succinyl-CoA + ADP + phosphate. The enzyme catalyses GTP + succinate + CoA = succinyl-CoA + GDP + phosphate. Its pathway is carbohydrate metabolism; tricarboxylic acid cycle; succinate from succinyl-CoA (ligase route): step 1/1. Succinyl-CoA synthetase functions in the citric acid cycle (TCA), coupling the hydrolysis of succinyl-CoA to the synthesis of either ATP or GTP and thus represents the only step of substrate-level phosphorylation in the TCA. The beta subunit provides nucleotide specificity of the enzyme and binds the substrate succinate, while the binding sites for coenzyme A and phosphate are found in the alpha subunit. This chain is Succinate--CoA ligase [ADP-forming] subunit beta, found in Acidithiobacillus ferrooxidans (strain ATCC 23270 / DSM 14882 / CIP 104768 / NCIMB 8455) (Ferrobacillus ferrooxidans (strain ATCC 23270)).